A 417-amino-acid polypeptide reads, in one-letter code: Serine hydroxymethyltransferase (417 aa).

Residues L112 and 116–118 (GHL) each bind (6S)-5,6,7,8-tetrahydrofolate. K221 carries the post-translational modification N6-(pyridoxal phosphate)lysine. (6S)-5,6,7,8-tetrahydrofolate is bound at residue E247.

This sequence belongs to the SHMT family. Homodimer. Pyridoxal 5'-phosphate serves as cofactor.

The protein resides in the cytoplasm. The catalysed reaction is (6R)-5,10-methylene-5,6,7,8-tetrahydrofolate + glycine + H2O = (6S)-5,6,7,8-tetrahydrofolate + L-serine. The protein operates within one-carbon metabolism; tetrahydrofolate interconversion. Its pathway is amino-acid biosynthesis; glycine biosynthesis; glycine from L-serine: step 1/1. Functionally, catalyzes the reversible interconversion of serine and glycine with tetrahydrofolate (THF) serving as the one-carbon carrier. This reaction serves as the major source of one-carbon groups required for the biosynthesis of purines, thymidylate, methionine, and other important biomolecules. Also exhibits THF-independent aldolase activity toward beta-hydroxyamino acids, producing glycine and aldehydes, via a retro-aldol mechanism. This chain is Serine hydroxymethyltransferase, found in Borreliella burgdorferi (strain ATCC 35210 / DSM 4680 / CIP 102532 / B31) (Borrelia burgdorferi).